A 334-amino-acid polypeptide reads, in one-letter code: tRNA uridine(34) hydroxylase (334 aa).

Residues 123 to 217 (SDPDVILVDT…YLEEVKAEES (95 aa)) enclose the Rhodanese domain. The Cysteine persulfide intermediate role is filled by Cys-177.

The protein belongs to the TrhO family.

The catalysed reaction is uridine(34) in tRNA + AH2 + O2 = 5-hydroxyuridine(34) in tRNA + A + H2O. Its function is as follows. Catalyzes oxygen-dependent 5-hydroxyuridine (ho5U) modification at position 34 in tRNAs. This Shewanella baltica (strain OS185) protein is tRNA uridine(34) hydroxylase.